Here is a 581-residue protein sequence, read N- to C-terminus: Dehydrocurvularin exporter (581 aa).

Polar residues predominate over residues 1-10 (MTDSPSLESN). The segment at 1-47 (MTDSPSLESNNKSDMDTPRPPASSHDEHDAAESVSEKQDSATTSPTG) is disordered. A glycan (N-linked (GlcNAc...) asparagine) is linked at asparagine 11. Residues 24–39 (SHDEHDAAESVSEKQD) are compositionally biased toward basic and acidic residues. 14 consecutive transmembrane segments (helical) span residues 61–81 (LVMF…GIIA), 96–116 (DVGW…PLWG), 126–146 (WVYL…AAAP), 159–179 (GWGA…VAPP), 184–204 (LLIG…PVIG), 215–235 (WCFW…LLFL), 251–271 (IILN…VCLT), 288–308 (VIAT…VEWL), 330–350 (IFCL…PIYF), 363–383 (VNTL…GGAI), 392–412 (YELA…ILDV), 424–444 (VLFG…VQGF), 456–476 (IMVM…QSLF), and 527–547 (VFAF…LIPF). Residues 552–581 (DHEKKPSKDAMASDEVKASEEVQQEKKVTV) are disordered. The span at 565-581 (DEVKASEEVQQEKKVTV) shows a compositional bias: basic and acidic residues.

The protein belongs to the major facilitator superfamily. TCR/Tet family.

It localises to the cell membrane. Its function is as follows. Efflux pump that is probably involved in the export of dehydrocurvularin. The chain is Dehydrocurvularin exporter from Alternaria cinerariae.